Here is a 261-residue protein sequence, read N- to C-terminus: MSARKFVVGGNWKCNGTLASIETLTKGVAASVDAELAKKVEVIVGVPFIYIPKVQQILAGEANGANILVSAENAWTKSGAYTGEVHVGMLVDCQVPYVILGHSERRQIFHESNEQVAEKVKVAIDAGLKVIACIGETEAQRIANQTEEVVAAQLKAINNAISKEAWKNIILAYEPVWAIGTGKTATPDQAQEVHQYIRKWMTENISKEVAEATRIQYGGSVNPANCNELAKKADIDGFLVGGASLDAAKFKTIINSVSEKF.

2 residues coordinate D-glyceraldehyde 3-phosphate: Asn11 and Lys13. His102 acts as the Electrophile in catalysis. Glu174 acts as the Proton acceptor in catalysis. The D-glyceraldehyde 3-phosphate site is built by Gly180, Leu239, and Gly241.

This sequence belongs to the triosephosphate isomerase family. In terms of assembly, homodimer.

It carries out the reaction D-glyceraldehyde 3-phosphate = dihydroxyacetone phosphate. The protein operates within carbohydrate biosynthesis; gluconeogenesis. It functions in the pathway carbohydrate degradation; glycolysis; D-glyceraldehyde 3-phosphate from glycerone phosphate: step 1/1. Catalyzes the interconversion of glyceraldehyde 3-phosphate and dihydroxyacetone phosphate in the glycolytic and gluconeogenic pathways. This is Triosephosphate isomerase from Entamoeba histolytica (strain ATCC 30459 / HM-1:IMSS / ABRM).